A 137-amino-acid chain; its full sequence is Large ribosomal subunit protein uL11 (137 aa).

The protein belongs to the universal ribosomal protein uL11 family. In terms of assembly, part of the ribosomal stalk of the 50S ribosomal subunit. Interacts with L10 and the large rRNA to form the base of the stalk. L10 forms an elongated spine to which L12 dimers bind in a sequential fashion forming a multimeric L10(L12)X complex. In terms of processing, one or more lysine residues are methylated.

In terms of biological role, forms part of the ribosomal stalk which helps the ribosome interact with GTP-bound translation factors. This Mycoplasma pneumoniae (strain ATCC 29342 / M129 / Subtype 1) (Mycoplasmoides pneumoniae) protein is Large ribosomal subunit protein uL11.